The following is a 734-amino-acid chain: Meiotic driver SPOK1 (734 aa).

Positions 4–41 (KDRIAQLLRELEEAKARVEEAKAREAQERCEKERLQLE) form a coiled coil. 2 disordered regions span residues 180–222 (ELTQ…ICSN) and 414–499 (LSSA…MADP). A compositionally biased stretch (polar residues) spans 416–429 (SAPSSQNTDISEYT). The span at 457-468 (NEHDEHDEDHSE) shows a compositional bias: basic and acidic residues.

The protein resides in the cytoplasm. Its subcellular location is the nucleus. Promotes unequal transmission of alleles from the parental zygote to progeny spores by acting as poison/antidote system, leading to poisoning of progeny that do not inherit the allele. May possess DNA nuclease activity that leads to spore killing, and a kinase activity that confers resistance to the nuclease activity. Can suppress meiotic drive by the P.anserina SPOK2, SPOK3 and SPOK4 proteins. The sequence is that of Meiotic driver SPOK1 from Podospora comata.